The chain runs to 237 residues: Probable glutathione-independent glyoxalase SNO4 (237 aa).

Residues C138, H139, and E170 contribute to the active site.

It belongs to the peptidase C56 family. HSP31-like subfamily. In terms of assembly, homodimer.

The protein localises to the cytoplasm. It localises to the P-body. The enzyme catalyses methylglyoxal + H2O = (R)-lactate + H(+). Functionally, catalyzes the conversion of methylglyoxal (MG) to D-lactate in a single glutathione (GSH)-independent step. May play a role in detoxifying endogenously produced glyoxals. Involved in protection against reactive oxygen species (ROS). Important for viability in stationary phase. May negatively regulate TORC1 in response to nutrient limitation. The chain is Probable glutathione-independent glyoxalase SNO4 from Saccharomyces cerevisiae (strain ATCC 204508 / S288c) (Baker's yeast).